We begin with the raw amino-acid sequence, 205 residues long: MELNGLRVSRETQARLQHFAALFQKWAKTINLVAPSTLDDLWHRHIADSSQIFQICPEPIRWADLGSGGGFPGVITAIFLAELQDGWAHLVESNHKKAAFLMTALRETEARGSVHAIRIEDAPAEIGECGAISARALADLDGLIGYAAPWMLGKENCRGFFHKGRDYLREIDEARGRWEFDLVEHKSAVEQESVILEISNLRRLV.

Residues G66, F71, 119–120 (IE), and R135 contribute to the S-adenosyl-L-methionine site.

It belongs to the methyltransferase superfamily. RNA methyltransferase RsmG family.

It is found in the cytoplasm. The catalysed reaction is guanosine(527) in 16S rRNA + S-adenosyl-L-methionine = N(7)-methylguanosine(527) in 16S rRNA + S-adenosyl-L-homocysteine. Functionally, specifically methylates the N7 position of guanine in position 527 of 16S rRNA. In Rhizobium etli (strain CIAT 652), this protein is Ribosomal RNA small subunit methyltransferase G.